A 529-amino-acid chain; its full sequence is Probable biotin-dependent acyl-coenzyme A carboxylase beta2 subunit (529 aa).

The CoA carboxyltransferase N-terminal domain occupies 20–271 (MSGKLDEINA…IKQGPAPAPV (252 aa)). The CoA carboxyltransferase C-terminal domain occupies 270–520 (PVTEPLFDAE…SAIANGPIKG (251 aa)).

Belongs to the AccD/PCCB family. As to quaternary structure, the biotin-dependent acyl-CoA carboxylase complex is composed of an AccA protein, which contains the biotin carboxylase (BC) and biotin carboxyl carrier protein (BCCP) domains, and an AccD protein, which contains the carboxyl transferase (CT) domain.

In terms of biological role, component of a biotin-dependent acyl-CoA carboxylase complex. This subunit transfers the CO2 from carboxybiotin to the CoA ester substrate. The sequence is that of Probable biotin-dependent acyl-coenzyme A carboxylase beta2 subunit (accD2) from Mycobacterium tuberculosis (strain ATCC 25618 / H37Rv).